The following is a 118-amino-acid chain: Small ribosomal subunit protein uS13 (118 aa).

Residues 93–118 (RGLPVRGQRTKTNARTRKGPRKPIRK) are disordered.

Belongs to the universal ribosomal protein uS13 family. Part of the 30S ribosomal subunit. Forms a loose heterodimer with protein S19. Forms two bridges to the 50S subunit in the 70S ribosome.

Located at the top of the head of the 30S subunit, it contacts several helices of the 16S rRNA. In the 70S ribosome it contacts the 23S rRNA (bridge B1a) and protein L5 of the 50S subunit (bridge B1b), connecting the 2 subunits; these bridges are implicated in subunit movement. Contacts the tRNAs in the A and P-sites. In Pseudomonas syringae pv. tomato (strain ATCC BAA-871 / DC3000), this protein is Small ribosomal subunit protein uS13.